Here is a 197-residue protein sequence, read N- to C-terminus: Xanthine phosphoribosyltransferase (197 aa).

Residues L20 and N27 each coordinate xanthine. 128 to 132 (ANGQA) is a 5-phospho-alpha-D-ribose 1-diphosphate binding site. K156 is a binding site for xanthine.

Belongs to the purine/pyrimidine phosphoribosyltransferase family. Xpt subfamily. Homodimer.

The protein localises to the cytoplasm. It catalyses the reaction XMP + diphosphate = xanthine + 5-phospho-alpha-D-ribose 1-diphosphate. It participates in purine metabolism; XMP biosynthesis via salvage pathway; XMP from xanthine: step 1/1. Converts the preformed base xanthine, a product of nucleic acid breakdown, to xanthosine 5'-monophosphate (XMP), so it can be reused for RNA or DNA synthesis. The chain is Xanthine phosphoribosyltransferase from Bacillus cereus (strain G9842).